Consider the following 885-residue polypeptide: GPI ethanolamine phosphate transferase 2 (885 aa).

3 N-linked (GlcNAc...) asparagine glycosylation sites follow: Asn-82, Asn-155, and Asn-194. Residues 413–433 form a helical membrane-spanning segment; that stretch reads DIYAGALILVITALAVIVVFN. Asn-443 carries an N-linked (GlcNAc...) asparagine glycan. 3 helical membrane-spanning segments follow: residues 447–467, 473–493, and 495–514; these read VMFY…SSLI, IWYF…FDTF, and SLQN…FMRS. An N-linked (GlcNAc...) asparagine glycan is attached at Asn-516. Helical transmembrane passes span 539–559, 581–601, 648–668, 697–717, 726–746, 768–788, 820–840, and 865–885; these read LMWG…YIQG, GLIS…FKLL, IQLS…RVII, ENIP…KLIY, YILT…FCMG, VFLV…FWSL, ILLV…VNLV, and SWIL…VLLF.

The protein belongs to the PIGG/PIGN/PIGO family. PIGG subfamily.

It localises to the endoplasmic reticulum membrane. It participates in glycolipid biosynthesis; glycosylphosphatidylinositol-anchor biosynthesis. Functionally, ethanolamine phosphate transferase involved in glycosylphosphatidylinositol-anchor biosynthesis. Transfers ethanolamine phosphate to the GPI second mannose. The chain is GPI ethanolamine phosphate transferase 2 (GPI7) from Candida albicans (strain SC5314 / ATCC MYA-2876) (Yeast).